The sequence spans 322 residues: Cytochrome f (322 aa).

The signal sequence occupies residues Met1–Ala37. Heme-binding residues include Tyr38, Cys58, Cys61, and His62. A helical transmembrane segment spans residues Val285 to Leu307.

The protein belongs to the cytochrome f family. As to quaternary structure, the 4 large subunits of the cytochrome b6-f complex are cytochrome b6, subunit IV (17 kDa polypeptide, petD), cytochrome f and the Rieske protein, while the 4 small subunits are PetG, PetL, PetM and PetN. The complex functions as a dimer. It depends on heme as a cofactor.

It is found in the plastid. Its subcellular location is the chloroplast thylakoid membrane. In terms of biological role, component of the cytochrome b6-f complex, which mediates electron transfer between photosystem II (PSII) and photosystem I (PSI), cyclic electron flow around PSI, and state transitions. This is Cytochrome f (petA) from Anthoceros angustus (Hornwort).